A 456-amino-acid polypeptide reads, in one-letter code: MQLSSLTAVSPVDGRYAGKTSSLRPIFSEYGLIRFRVMVEVRWLQRLAAHAGIPEVAPFSAEANALLDSLASDFQLEHAERIKEIERTTNHDVKAVEYLLKEQAAKLPELAAVSEFIHFACTSEDINNLSHALMLREGRDSVLLPLMRQIAEAIRELAVKLADVPMLSRTHGQPASPTTLGKELANVVYRLERQIKQVAGIELLGKINGAVGNYNAHLSAYPEVDWEANARQFIEGDLGLTFNPYTTQIEPHDYIAELFDAIARFNTILIDFDRDVWGYISLGYFKQKTVAGEIGSSTMPHKVNPIDFENSEGNLGIANALFQHLASKLPISRWQRDLTDSTVLRNLGVGIAHSIIAYEASLKGIGKLELNAQRIAEDLDACWEVLAEPVQTVMRRYGVENPYEKLKELTRGKGISAEALQTFIEELAIPAEAKVELKKLTPAGYVGNAAAQAKRI.

N(6)-(1,2-dicarboxyethyl)-AMP is bound by residues 15–16, 90–92, and 122–123; these read RY, NHD, and TS. His171 serves as the catalytic Proton donor/acceptor. A N(6)-(1,2-dicarboxyethyl)-AMP-binding site is contributed by Gln248. Catalysis depends on Ser296, which acts as the Proton donor/acceptor. Residues Ser297, 302–304, Asn310, Arg336, and 341–345 contribute to the N(6)-(1,2-dicarboxyethyl)-AMP site; these read KVN and STVLR.

The protein belongs to the lyase 1 family. Adenylosuccinate lyase subfamily. As to quaternary structure, homotetramer. Residues from neighboring subunits contribute catalytic and substrate-binding residues to each active site.

It carries out the reaction N(6)-(1,2-dicarboxyethyl)-AMP = fumarate + AMP. The enzyme catalyses (2S)-2-[5-amino-1-(5-phospho-beta-D-ribosyl)imidazole-4-carboxamido]succinate = 5-amino-1-(5-phospho-beta-D-ribosyl)imidazole-4-carboxamide + fumarate. Its pathway is purine metabolism; AMP biosynthesis via de novo pathway; AMP from IMP: step 2/2. It functions in the pathway purine metabolism; IMP biosynthesis via de novo pathway; 5-amino-1-(5-phospho-D-ribosyl)imidazole-4-carboxamide from 5-amino-1-(5-phospho-D-ribosyl)imidazole-4-carboxylate: step 2/2. Its function is as follows. Catalyzes two reactions in de novo purine nucleotide biosynthesis. Catalyzes the breakdown of 5-aminoimidazole- (N-succinylocarboxamide) ribotide (SAICAR or 2-[5-amino-1-(5-phospho-beta-D-ribosyl)imidazole-4-carboxamido]succinate) to 5-aminoimidazole-4-carboxamide ribotide (AICAR or 5-amino-1-(5-phospho-beta-D-ribosyl)imidazole-4-carboxamide) and fumarate, and of adenylosuccinate (ADS or N(6)-(1,2-dicarboxyethyl)-AMP) to adenosine monophosphate (AMP) and fumarate. In Pseudomonas aeruginosa (strain ATCC 15692 / DSM 22644 / CIP 104116 / JCM 14847 / LMG 12228 / 1C / PRS 101 / PAO1), this protein is Adenylosuccinate lyase (purB).